Here is a 530-residue protein sequence, read N- to C-terminus: Autoinducer-2 kinase (530 aa).

It belongs to the FGGY kinase family.

Its subcellular location is the cytoplasm. It catalyses the reaction (S)-4,5-dihydroxypentane-2,3-dione + ATP = (2S)-2-hydroxy-3,4-dioxopentyl phosphate + ADP + H(+). Its function is as follows. Catalyzes the phosphorylation of autoinducer-2 (AI-2) to phospho-AI-2, which subsequently inactivates the transcriptional regulator LsrR and leads to the transcription of the lsr operon. Phosphorylates the ring-open form of (S)-4,5-dihydroxypentane-2,3-dione (DPD), which is the precursor to all AI-2 signaling molecules, at the C5 position. In Yersinia pseudotuberculosis serotype O:1b (strain IP 31758), this protein is Autoinducer-2 kinase.